The sequence spans 1231 residues: Fanconi anemia group J protein homolog (1231 aa).

In terms of domain architecture, Helicase ATP-binding spans 11–448 (GGVKILFPCR…SDHEPLRAVC (438 aa)). An ATP-binding site is contributed by 46 to 53 (SPTGSGKS). Disordered stretches follow at residues 104-126 (TFSSDRQMNSTDNAPSNISGASS) and 147-166 (QDDDFQTDRKRIRQSHDEQL). A compositionally biased stretch (basic and acidic residues) spans 152-166 (QTDRKRIRQSHDEQL). A Nuclear localization signal motif is present at residues 155–173 (RKRIRQSHDEQLQARKRRC). [4Fe-4S] cluster is bound by residues Cys-291, Cys-304, Cys-316, and Cys-356. The short motif at 399–402 (DEAH) is the DEAH box element. The span at 890–903 (SKNQQQRMQMSSTN) shows a compositional bias: polar residues. Disordered regions lie at residues 890-924 (SKNQQQRMQMSSTNCDDEPSQGTSSSSKNTSPTSS), 936-956 (VSEFTQPTSSTQSSVTSPPEI), and 1195-1231 (GNENAFNIGRNKGTEQKNRENRLSRSRNKGVSSFFLD). Low complexity-rich tracts occupy residues 909–924 (SQGTSSSSKNTSPTSS) and 940–954 (TQPTSSTQSSVTSPP). Over residues 1206–1217 (KGTEQKNRENRL) the composition is skewed to basic and acidic residues.

The protein belongs to the DEAD box helicase family. DEAH subfamily. The cofactor is [4Fe-4S] cluster.

The protein resides in the nucleus. The enzyme catalyses Couples ATP hydrolysis with the unwinding of duplex DNA at the replication fork by translocating in the 5'-3' direction. This creates two antiparallel DNA single strands (ssDNA). The leading ssDNA polymer is the template for DNA polymerase III holoenzyme which synthesizes a continuous strand.. It catalyses the reaction ATP + H2O = ADP + phosphate + H(+). Functionally, DNA-dependent helicase and 5' to 3' DNA helicase required for the maintenance of chromosomal stability. Involved in the repair of DNA double-strand breaks by homologous recombination. Involved in the repair of abasic sites at replication forks by promoting the degradation of DNA-protein cross-links: acts by catalyzing unfolding of HMCES DNA-protein cross-link via its helicase activity, exposing the underlying DNA and enabling cleavage of the DNA-protein adduct by the SPRTN metalloprotease. This chain is Fanconi anemia group J protein homolog (brip1.L), found in Xenopus laevis (African clawed frog).